The chain runs to 146 residues: Large ribosomal subunit protein uL13 (146 aa).

This sequence belongs to the universal ribosomal protein uL13 family. Part of the 50S ribosomal subunit.

Its function is as follows. This protein is one of the early assembly proteins of the 50S ribosomal subunit, although it is not seen to bind rRNA by itself. It is important during the early stages of 50S assembly. This Sulfurisphaera tokodaii (strain DSM 16993 / JCM 10545 / NBRC 100140 / 7) (Sulfolobus tokodaii) protein is Large ribosomal subunit protein uL13.